Here is a 504-residue protein sequence, read N- to C-terminus: Ribonuclease Y (504 aa).

The KH domain occupies 194 to 279 (TVHVVSLPND…EMVEKAKQEV (86 aa)). The region spanning 320 to 413 (VLKHSMEVAY…VQAADAISAA (94 aa)) is the HD domain.

This sequence belongs to the RNase Y family.

Functionally, endoribonuclease that initiates mRNA decay. This Clostridium novyi (strain NT) protein is Ribonuclease Y.